The chain runs to 100 residues: Large ribosomal subunit protein uL23 (100 aa).

This sequence belongs to the universal ribosomal protein uL23 family. As to quaternary structure, part of the 50S ribosomal subunit. Contacts protein L29, and trigger factor when it is bound to the ribosome.

Functionally, one of the early assembly proteins it binds 23S rRNA. One of the proteins that surrounds the polypeptide exit tunnel on the outside of the ribosome. Forms the main docking site for trigger factor binding to the ribosome. This Lactobacillus acidophilus (strain ATCC 700396 / NCK56 / N2 / NCFM) protein is Large ribosomal subunit protein uL23.